A 403-amino-acid polypeptide reads, in one-letter code: Multifunctional CCA protein (403 aa).

The ATP site is built by glycine 8 and arginine 11. The CTP site is built by glycine 8 and arginine 11. Positions 21 and 23 each coordinate Mg(2+). ATP is bound by residues arginine 91, arginine 137, and arginine 140. CTP-binding residues include arginine 91, arginine 137, and arginine 140. In terms of domain architecture, HD spans 228 to 329 (TGIHTLMVAK…LKVLGLLDVW (102 aa)).

Belongs to the tRNA nucleotidyltransferase/poly(A) polymerase family. Bacterial CCA-adding enzyme type 1 subfamily. Monomer. Can also form homodimers and oligomers. Requires Mg(2+) as cofactor. Ni(2+) is required as a cofactor.

The enzyme catalyses a tRNA precursor + 2 CTP + ATP = a tRNA with a 3' CCA end + 3 diphosphate. It carries out the reaction a tRNA with a 3' CCA end + 2 CTP + ATP = a tRNA with a 3' CCACCA end + 3 diphosphate. Its function is as follows. Catalyzes the addition and repair of the essential 3'-terminal CCA sequence in tRNAs without using a nucleic acid template. Adds these three nucleotides in the order of C, C, and A to the tRNA nucleotide-73, using CTP and ATP as substrates and producing inorganic pyrophosphate. tRNA 3'-terminal CCA addition is required both for tRNA processing and repair. Also involved in tRNA surveillance by mediating tandem CCA addition to generate a CCACCA at the 3' terminus of unstable tRNAs. While stable tRNAs receive only 3'-terminal CCA, unstable tRNAs are marked with CCACCA and rapidly degraded. The protein is Multifunctional CCA protein of Vibrio cholerae serotype O1 (strain ATCC 39541 / Classical Ogawa 395 / O395).